Consider the following 378-residue polypeptide: N-acetyldiaminopimelate deacetylase (378 aa).

The active site involves D65. Catalysis depends on E124, which acts as the Proton acceptor.

It belongs to the peptidase M20A family. N-acetyldiaminopimelate deacetylase subfamily.

The enzyme catalyses N-acetyl-(2S,6S)-2,6-diaminopimelate + H2O = (2S,6S)-2,6-diaminopimelate + acetate. Its pathway is amino-acid biosynthesis; L-lysine biosynthesis via DAP pathway; LL-2,6-diaminopimelate from (S)-tetrahydrodipicolinate (acetylase route): step 3/3. Functionally, catalyzes the conversion of N-acetyl-diaminopimelate to diaminopimelate and acetate. This Anoxybacillus flavithermus (strain DSM 21510 / WK1) protein is N-acetyldiaminopimelate deacetylase.